The sequence spans 395 residues: S-adenosylmethionine synthase (395 aa).

ATP is bound at residue H16. D18 serves as a coordination point for Mg(2+). E44 is a binding site for K(+). Residues E57 and Q100 each coordinate L-methionine. The tract at residues 100-110 (QSPDIAQGVDR) is flexible loop. Residues 167 to 169 (DAK), 233 to 234 (RF), D242, 248 to 249 (RK), A265, and K269 each bind ATP. D242 contacts L-methionine. K273 contributes to the L-methionine binding site.

The protein belongs to the AdoMet synthase family. Homotetramer; dimer of dimers. The cofactor is Mg(2+). K(+) serves as cofactor.

The protein resides in the cytoplasm. It carries out the reaction L-methionine + ATP + H2O = S-adenosyl-L-methionine + phosphate + diphosphate. It functions in the pathway amino-acid biosynthesis; S-adenosyl-L-methionine biosynthesis; S-adenosyl-L-methionine from L-methionine: step 1/1. In terms of biological role, catalyzes the formation of S-adenosylmethionine (AdoMet) from methionine and ATP. The overall synthetic reaction is composed of two sequential steps, AdoMet formation and the subsequent tripolyphosphate hydrolysis which occurs prior to release of AdoMet from the enzyme. This is S-adenosylmethionine synthase from Burkholderia ambifaria (strain MC40-6).